The primary structure comprises 79 residues: Sec-independent protein translocase protein TatA (79 aa).

Residues 1–21 form a helical membrane-spanning segment; sequence MGGWSSPSHWLIILLIVVLLF. Over residues 52–61 the composition is skewed to basic and acidic residues; it reads KNTQKIEENK. Residues 52–79 form a disordered region; it reads KNTQKIEENKNTTNNTSADASIDKTKKA.

Belongs to the TatA/E family. The Tat system comprises two distinct complexes: a TatABC complex, containing multiple copies of TatA, TatB and TatC subunits, and a separate TatA complex, containing only TatA subunits. Substrates initially bind to the TatABC complex, which probably triggers association of the separate TatA complex to form the active translocon.

The protein localises to the cell inner membrane. Its function is as follows. Part of the twin-arginine translocation (Tat) system that transports large folded proteins containing a characteristic twin-arginine motif in their signal peptide across membranes. TatA could form the protein-conducting channel of the Tat system. The chain is Sec-independent protein translocase protein TatA from Campylobacter jejuni subsp. jejuni serotype O:6 (strain 81116 / NCTC 11828).